The sequence spans 976 residues: Alpha-amylase (976 aa).

The N-terminal stretch at 1–33 (MKRGKLWGRLVSAAGLSLSIFLSSIGNVSTAYA) is a signal peptide. The interval 45–98 (TKENTESATDASSNEASDAEADNDTDEAITDASSKELSAENDGASESDSSFDEY) is disordered. Positions 50–60 (ESATDASSNEA) are enriched in low complexity. Acidic residues-rich tracts occupy residues 61–73 (SDAE…DEAI) and 87–96 (GASESDSSFD). Residues asparagine 243, threonine 284, and aspartate 293 each coordinate Ca(2+). Aspartate 323 functions as the Nucleophile in the catalytic mechanism. Histidine 327 serves as a coordination point for Ca(2+). Glutamate 375 acts as the Proton donor in catalysis.

The protein belongs to the glycosyl hydrolase 13 family. As to quaternary structure, monomer. Ca(2+) serves as cofactor.

It carries out the reaction Endohydrolysis of (1-&gt;4)-alpha-D-glucosidic linkages in polysaccharides containing three or more (1-&gt;4)-alpha-linked D-glucose units.. The chain is Alpha-amylase (amyA) from Butyrivibrio fibrisolvens.